The following is an 877-amino-acid chain: Alanine--tRNA ligase (877 aa).

The Zn(2+) site is built by histidine 561, histidine 565, cysteine 669, and histidine 673.

The protein belongs to the class-II aminoacyl-tRNA synthetase family. The cofactor is Zn(2+).

The protein resides in the cytoplasm. The enzyme catalyses tRNA(Ala) + L-alanine + ATP = L-alanyl-tRNA(Ala) + AMP + diphosphate. Functionally, catalyzes the attachment of alanine to tRNA(Ala) in a two-step reaction: alanine is first activated by ATP to form Ala-AMP and then transferred to the acceptor end of tRNA(Ala). Also edits incorrectly charged Ser-tRNA(Ala) and Gly-tRNA(Ala) via its editing domain. The protein is Alanine--tRNA ligase of Endomicrobium trichonymphae.